The chain runs to 113 residues: UPF0482 protein YnfB (113 aa).

The first 28 residues, 1 to 28 (MKITLSKRIGLLAFLLPCALALSTTVHA), serve as a signal peptide directing secretion.

Belongs to the UPF0482 family.

This is UPF0482 protein YnfB from Escherichia coli O127:H6 (strain E2348/69 / EPEC).